Reading from the N-terminus, the 95-residue chain is Integration host factor subunit beta (95 aa).

The segment at Arg56–Tyr76 is disordered.

This sequence belongs to the bacterial histone-like protein family. In terms of assembly, heterodimer of an alpha and a beta chain.

In terms of biological role, this protein is one of the two subunits of integration host factor, a specific DNA-binding protein that functions in genetic recombination as well as in transcriptional and translational control. The polypeptide is Integration host factor subunit beta (Shewanella woodyi (strain ATCC 51908 / MS32)).